Here is a 520-residue protein sequence, read N- to C-terminus: Cytochrome P450 monooxygenase btcC (520 aa).

Residues Ile2 to Ile22 form a helical membrane-spanning segment. Residue Asn177 is glycosylated (N-linked (GlcNAc...) asparagine). Cys448 contributes to the heme binding site. N-linked (GlcNAc...) asparagine glycosylation occurs at Asn511.

This sequence belongs to the cytochrome P450 family. Heme is required as a cofactor.

It localises to the membrane. It participates in secondary metabolite biosynthesis; terpenoid biosynthesis. Its function is as follows. Cytochrome P4590 monooxygenase part of the gene cluster that mediates the biosynthesis of betaestacins. The bifunctional terpene synthase btcA converts isopentenyl diphosphate (IPP) and dimethylallyl diphosphate (DMAPP) into the sesterterpene betaestacin I. The C-terminal prenyltransferase (PT) domain of btcA catalyzes formation of GFPP, whereas the N-terminal terpene cyclase (TC) domain catalyzes the cyclization of GFPP into betaestacin I. The cytochrome P450 monooxygenase btcB oxidizes the C25 methyl group of betaestacin I to yield the carboxylic acid betaestacin IV via the alcohol betaestacin III. The cytochrome P450 monooxygenase btcC further catalyzes the multistep oxidation of betaestacin IV to produce several compounds, including betaestacins Va, Vb, Vc and VI. In Colletotrichum orbiculare (strain 104-T / ATCC 96160 / CBS 514.97 / LARS 414 / MAFF 240422) (Cucumber anthracnose fungus), this protein is Cytochrome P450 monooxygenase btcC.